The primary structure comprises 253 residues: Triosephosphate isomerase (253 aa).

9-11 (NWK) serves as a coordination point for substrate. The Electrophile role is filled by His-94. Catalysis depends on Glu-163, which acts as the Proton acceptor. Residues Gly-169, Ser-209, and 230–231 (GG) each bind substrate.

It belongs to the triosephosphate isomerase family. In terms of assembly, homodimer.

Its subcellular location is the cytoplasm. It catalyses the reaction D-glyceraldehyde 3-phosphate = dihydroxyacetone phosphate. It functions in the pathway carbohydrate biosynthesis; gluconeogenesis. It participates in carbohydrate degradation; glycolysis; D-glyceraldehyde 3-phosphate from glycerone phosphate: step 1/1. Functionally, involved in the gluconeogenesis. Catalyzes stereospecifically the conversion of dihydroxyacetone phosphate (DHAP) to D-glyceraldehyde-3-phosphate (G3P). The polypeptide is Triosephosphate isomerase (Dehalococcoides mccartyi (strain CBDB1)).